The primary structure comprises 818 residues: Beta-glucosidase (818 aa).

Residue Asp222 is part of the active site. Residues 386 to 538 form the PA14 domain; that stretch reads VFSGEMTVEY…GDAGIAEAVE (153 aa).

Belongs to the glycosyl hydrolase 3 family.

It localises to the cytoplasm. It catalyses the reaction Hydrolysis of terminal, non-reducing beta-D-glucosyl residues with release of beta-D-glucose.. Its function is as follows. Involved in modifying a vir-inducing plant signal molecule. Hydrolyzes coniferin but not cellobiose. The chain is Beta-glucosidase (cbg-1) from Rhizobium radiobacter (Agrobacterium tumefaciens).